Reading from the N-terminus, the 227-residue chain is MFS-type transporter FVEG_08288 (227 aa).

The helical transmembrane segment at 8–28 (VFLTVLIAIASCSVYILNIAI) threads the bilayer. N-linked (GlcNAc...) asparagine glycosylation is present at N40. A run of 5 helical transmembrane segments spans residues 43–63 (TVGL…MAGG), 100–120 (VANT…YYGV), 122–142 (FMVP…HFTL), 164–181 (FVRN…APWM), and 188–208 (YMMT…IWLI).

It belongs to the major facilitator superfamily.

It is found in the membrane. Functionally, MFS-type transporter; part of the Fusarium detoxification of benzoxazolinone cluster 1 (FDB1) involved in the degradation of benzoxazolinones produced by the host plant. Maize, wheat, and rye produce the 2 benzoxazinone phytoanticipins 2,4-dihy-droxy-7-methoxy-1,4-benzoxazin-3-one (DIMBOA) and 2,4-dihydroxy-1,4-benzoxazin-3-one (DIBOA) that, due to their inherent instability once released, spontaneously degrade to the more stable corresponding benzoxazolinones, 6-methoxy-2-benzoxazolinone (MBOA) and 2-benzoxazolinone (BOA), respectively. This is MFS-type transporter FVEG_08288 from Gibberella moniliformis (strain M3125 / FGSC 7600) (Maize ear and stalk rot fungus).